The chain runs to 156 residues: Ribosomal RNA large subunit methyltransferase H (156 aa).

S-adenosyl-L-methionine is bound by residues leucine 73, glycine 104, and 123–128 (LSPLTL).

Belongs to the RNA methyltransferase RlmH family. In terms of assembly, homodimer.

Its subcellular location is the cytoplasm. It carries out the reaction pseudouridine(1915) in 23S rRNA + S-adenosyl-L-methionine = N(3)-methylpseudouridine(1915) in 23S rRNA + S-adenosyl-L-homocysteine + H(+). Specifically methylates the pseudouridine at position 1915 (m3Psi1915) in 23S rRNA. The polypeptide is Ribosomal RNA large subunit methyltransferase H (Aliivibrio salmonicida (strain LFI1238) (Vibrio salmonicida (strain LFI1238))).